Reading from the N-terminus, the 288-residue chain is Cyclin-dependent kinase 2 homolog (288 aa).

Residues 4–284 (YHGLEKIGEG…AKQALEHAYF (281 aa)) form the Protein kinase domain. Residues 10-18 (IGEGTYGVV) and Lys-32 each bind ATP. Position 14 is a phosphothreonine (Thr-14). Position 15 is a phosphotyrosine (Tyr-15). Asp-125 acts as the Proton acceptor in catalysis. At Thr-158 the chain carries Phosphothreonine.

It belongs to the protein kinase superfamily. CMGC Ser/Thr protein kinase family. CDC2/CDKX subfamily. In terms of assembly, may form a complex composed of at least the catalytic subunit CRK2 and a cyclin. Mg(2+) is required as a cofactor. Autophosphorylates in presence of cyclin cyc-1 but not in presence of cyclin cyc-3.

The protein localises to the cytoplasm. It catalyses the reaction L-seryl-[protein] + ATP = O-phospho-L-seryl-[protein] + ADP + H(+). The enzyme catalyses L-threonyl-[protein] + ATP = O-phospho-L-threonyl-[protein] + ADP + H(+). The catalysed reaction is [DNA-directed RNA polymerase] + ATP = phospho-[DNA-directed RNA polymerase] + ADP + H(+). With respect to regulation, phosphorylation at Thr-14 or Tyr-15 inactivates the enzyme, while phosphorylation at Thr-158 activates it. Activated by cyclin cyc-1 in vitro. Activated by cyclin cyc-3 in vitro. In terms of biological role, serine/threonine-protein kinase. Involved in the control of the cell cycle. Required for entry into S-phase and mitosis. Probable component of the kinase complex that phosphorylates the repetitive C-terminus of RNA polymerase II. In schizonts, phosphorylates ORC1 resulting in its dissociation from DNA, relocalization to the cytoplasm and likely its degradation. This is Cyclin-dependent kinase 2 homolog from Plasmodium falciparum (isolate 3D7).